The chain runs to 439 residues: Glutamine synthetase (439 aa).

The region spanning 13-98 (ENVRFIRLQF…VICDVYTPDG (86 aa)) is the GS beta-grasp domain. Residues 105-439 (PRYRLRRMME…NWELQRYLYL (335 aa)) form the GS catalytic domain. Residues E128 and E130 each contribute to the Mg(2+) site. E180 contributes to the ATP binding site. Mg(2+) is bound by residues E185 and E192. Residues 236-237 (NG) and G237 contribute to the L-glutamate site. H241 lines the Mg(2+) pocket. Residues 243-245 (HMS) and S245 each bind ATP. L-glutamate contacts are provided by R294, E300, and R312. ATP is bound by residues R312, R317, and K324. Position 329 (E329) interacts with Mg(2+). Position 331 (R331) interacts with L-glutamate.

The protein belongs to the glutamine synthetase family. In terms of assembly, oligomer of 12 subunits arranged in the form of two hexagons. In its feedback-inhibited form, interacts with TnrA in order to block its DNA-binding activity. Mg(2+) is required as a cofactor.

Its subcellular location is the cytoplasm. It carries out the reaction L-glutamate + NH4(+) + ATP = L-glutamine + ADP + phosphate + H(+). Inhibited by glutamine. Glutamine synthetase (GS) is an unusual multitasking protein that functions as an enzyme, a transcription coregulator, and a chaperone in ammonium assimilation and in the regulation of genes involved in nitrogen metabolism. It catalyzes the ATP-dependent biosynthesis of glutamine from glutamate and ammonia. Feedback-inhibited GlnA also interacts with and regulates the activity of the transcriptional regulator TnrA. During nitrogen limitation, TnrA is in its DNA-binding active state and turns on the transcription of genes required for nitrogen assimilation. Under conditions of nitrogen excess, feedback-inhibited GlnA forms a stable complex with TnrA, which inhibits its DNA-binding activity. In contrast, feedback-inhibited GlnA acts as a chaperone to stabilize the DNA-binding activity of GlnR, which represses the transcription of nitrogen assimilation genes. The chain is Glutamine synthetase from Thermotoga maritima (strain ATCC 43589 / DSM 3109 / JCM 10099 / NBRC 100826 / MSB8).